Reading from the N-terminus, the 304-residue chain is MTMDGKNKEEEQYLDLCKRIIDEGEFRPDRTGTGTLSLFAPPQLRFSLRDDTFPLLTTKKVFTRGIILELLWFLAGDTDANLLSEQGVKIWDGNGSREYLDKMGFKDRKVGDLGPVYGFQWRHFGAKYKTCDDDYTGQGIDQLKQVIHKLKTNPYDRRIIMSAWNPADFDKMALPPCHIFSQFYVSFPKEGEGSGKPRLSCLLYQRSCDMGLGVPFNIASYALLTRMIAKVVDMEPGEFIHTLGDAHVYKDHIDALKEQITRNPRPFPKLKIKRDVKDIDDFKLTDFEIEDYNPHPRIQMKMSV.

DUMP-binding positions include R30 and 157 to 158 (RR). The Nucleophile role is filled by C177. DUMP-binding positions include 206–209 (RSCD), N217, and 247–249 (HVY). A (6R)-5,10-methylene-5,6,7,8-tetrahydrofolate-binding site is contributed by D209.

This sequence belongs to the thymidylate synthase family. As to quaternary structure, homodimer.

It is found in the nucleus. It carries out the reaction dUMP + (6R)-5,10-methylene-5,6,7,8-tetrahydrofolate = 7,8-dihydrofolate + dTMP. It functions in the pathway pyrimidine metabolism; dTTP biosynthesis. Its activity is regulated as follows. Inhibited by 5-fluoro-2'-deoxyuridine 5'-monophosphate (FdUMP). Its function is as follows. Thymidylate synthase required for de novo biosynthesis of pyrimidine deoxyribonucleotides. Required for both nuclear and mitochondrial DNA synthesis. In Saccharomyces cerevisiae (strain ATCC 204508 / S288c) (Baker's yeast), this protein is Thymidylate synthase (CDC21).